The following is a 765-amino-acid chain: MFSKFTSILQHAVEALAPSLPLQEDFVYHWKAITHYYIETSDDKAPVTDTNIPSHLEQMLVILVQEENEREFGETGPCMEYLLHHKILETLYTLGKADCPPGMKQQVLVFYTKLLGKIRQPLLPHINVHRPVQKLIRLCGEVLATPTENEEIQFLCIVCAKLKQDPYLVNFFLENKFKSLVSQGGPNAISEDVLKSQDSLSTDTGQSCQAEEPLGASGTEHTDLGDQPSHQMGDLSTSLENLSVTALPEATVVRPNQDYNLVNSLLNLTRSPDGRIAVKACEGLMLLVSLPEPAAAKCLTQSTCLCELLTDRLASLYKALPQSVDPLDIETVEAVNWGLDSYSHKEDASAFPGKRALISFLSWFDYCDQLIKEAQKTAAVALAKAVHERFFIGVMEPQLMQTSEMGILTSTALLHRIVRQVTSDILLQEMVFFILGEQREPETLAEISRHPLRHRLIEHCDHISDEISIMTLRMFEHLLQKPNEHILYNLVLRNLEERNYTEYKPVCPEDKDVVENGLIAGAVDLEEDPLFTDISPDNTLSNQEWLSSSPPATPDHPKTDGKTEVHKIVNSFLCLVPDEAKSSYHVEGTGYDTYLRDAHRQFRDYCAICLRWEWPGSPKALERCNLEAAFFEGHFLKVLFDRMGRILDQPYDVNLQVTSVLSRLSLFPHPHIHEYLLDPYVNLASGCRSLFSVIVRVVGDLMVRIQRIQDFTPKLLLVRKRLLGLEPEGPVIDHITLLEGVIVLEEFCKELAAIAFVKYHAASTP.

Composition is skewed to polar residues over residues 200-209 (LSTDTGQSCQ) and 538-550 (NTLSNQEWLSSSP). Disordered regions lie at residues 200 to 234 (LSTDTGQSCQAEEPLGASGTEHTDLGDQPSHQMGD) and 538 to 562 (NTLSNQEWLSSSPPATPDHPKTDGK).

The protein belongs to the FHIP family.

Its function is as follows. May be required for proper functioning of the nervous system. This chain is FHF complex subunit HOOK interacting protein 2A (FHIP2A), found in Bos taurus (Bovine).